The following is a 486-amino-acid chain: Glycogen synthase (486 aa).

Position 20 (Lys20) interacts with ADP-alpha-D-glucose.

This sequence belongs to the glycosyltransferase 1 family. Bacterial/plant glycogen synthase subfamily.

It carries out the reaction [(1-&gt;4)-alpha-D-glucosyl](n) + ADP-alpha-D-glucose = [(1-&gt;4)-alpha-D-glucosyl](n+1) + ADP + H(+). Its pathway is glycan biosynthesis; glycogen biosynthesis. Functionally, synthesizes alpha-1,4-glucan chains using ADP-glucose. The sequence is that of Glycogen synthase from Aeromonas hydrophila subsp. hydrophila (strain ATCC 7966 / DSM 30187 / BCRC 13018 / CCUG 14551 / JCM 1027 / KCTC 2358 / NCIMB 9240 / NCTC 8049).